Reading from the N-terminus, the 60-residue chain is Large ribosomal subunit protein bL32 (60 aa).

This sequence belongs to the bacterial ribosomal protein bL32 family.

The protein is Large ribosomal subunit protein bL32 of Thermosipho africanus (strain TCF52B).